Reading from the N-terminus, the 257-residue chain is MEGMAQHPVPRTVEEVFSDYKGRRAGLIKALTTDVEKFYQLVDPEKENLCLYGFPNETWEVNLPVEEVPPELPEPALGINFARDGMQEKDWLSLVAVHSDSWLLAVAFYFGARFGFGKNDRKRLFQMINDLPTVFELATGTAKQSKDQLTAHNNGSNSKYKSSGKSRQSESQTKGVKMSAPVKEEVDSGEEEEEDDDEQGATCGACGDNYGTDEFWICCDMCEKWFHGKCVKITPAKAEHIKQYKCPGCSIKKPRIG.

The disordered stretch occupies residues 145–200 (SKDQLTAHNNGSNSKYKSSGKSRQSESQTKGVKMSAPVKEEVDSGEEEEEDDDEQG). The segment covering 153 to 166 (NNGSNSKYKSSGKS) has biased composition (low complexity). The span at 187–199 (DSGEEEEEDDDEQ) shows a compositional bias: acidic residues. The segment at 200–252 (GATCGACGDNYGTDEFWICCDMCEKWFHGKCVKITPAKAEHIKQYKCPGCSIK) adopts a PHD-type zinc-finger fold.

It belongs to the Alfin family. In terms of assembly, interacts with H3K4me3 and to a lesser extent with H3K4me2. In terms of tissue distribution, predominantly expressed in the roots.

The protein resides in the nucleus. Histone-binding component that specifically recognizes H3 tails trimethylated on 'Lys-4' (H3K4me3), which mark transcription start sites of virtually all active genes. Transcriptional regulator that binds specifically to DNA sequences 5'-GNGGTG-3' or 5'-GTGGNG-3', including promoter elements of the salt-inducible PRP2 gene. Plays a role in salinity tolerance. This chain is PHD finger protein Alfin1 (ALFIN-1), found in Medicago sativa (Alfalfa).